The following is a 144-amino-acid chain: Large ribosomal subunit protein uL15 (144 aa).

The tract at residues 1–57 (MRLNTLSPAPGSKPSAKRVGRGIGSGLGKTCGRGHKGQKSRSGGSVRPGFEGGQMPL) is disordered. Positions 21-31 (RGIGSGLGKTC) are enriched in gly residues.

This sequence belongs to the universal ribosomal protein uL15 family. In terms of assembly, part of the 50S ribosomal subunit.

Functionally, binds to the 23S rRNA. This chain is Large ribosomal subunit protein uL15, found in Photobacterium profundum (strain SS9).